A 544-amino-acid polypeptide reads, in one-letter code: CTP synthase (544 aa).

The interval 1-265 is amidoligase domain; the sequence is MTKFIFVTGG…DNIITEQLQL (265 aa). CTP is bound at residue serine 13. A UTP-binding site is contributed by serine 13. ATP is bound by residues 14–19 and aspartate 71; that span reads SLGKGI. Mg(2+) contacts are provided by aspartate 71 and glutamate 139. Residues 146–148, 186–191, and lysine 222 each bind CTP; these read DIE and KTKPTQ. Residues 186 to 191 and lysine 222 each bind UTP; that span reads KTKPTQ. The Glutamine amidotransferase type-1 domain maps to 290–544; sequence KIAMVGKYVD…VKAALNNKKA (255 aa). Glycine 353 serves as a coordination point for L-glutamine. Cysteine 380 functions as the Nucleophile; for glutamine hydrolysis in the catalytic mechanism. L-glutamine-binding positions include 381 to 384, glutamate 404, and arginine 471; that span reads LGMQ. Residues histidine 517 and glutamate 519 contribute to the active site.

This sequence belongs to the CTP synthase family. Homotetramer.

It carries out the reaction UTP + L-glutamine + ATP + H2O = CTP + L-glutamate + ADP + phosphate + 2 H(+). The catalysed reaction is L-glutamine + H2O = L-glutamate + NH4(+). The enzyme catalyses UTP + NH4(+) + ATP = CTP + ADP + phosphate + 2 H(+). It participates in pyrimidine metabolism; CTP biosynthesis via de novo pathway; CTP from UDP: step 2/2. With respect to regulation, allosterically activated by GTP, when glutamine is the substrate; GTP has no effect on the reaction when ammonia is the substrate. The allosteric effector GTP functions by stabilizing the protein conformation that binds the tetrahedral intermediate(s) formed during glutamine hydrolysis. Inhibited by the product CTP, via allosteric rather than competitive inhibition. In terms of biological role, catalyzes the ATP-dependent amination of UTP to CTP with either L-glutamine or ammonia as the source of nitrogen. Regulates intracellular CTP levels through interactions with the four ribonucleotide triphosphates. This chain is CTP synthase, found in Neisseria meningitidis serogroup A / serotype 4A (strain DSM 15465 / Z2491).